The primary structure comprises 156 residues: SCP2 sterol-binding domain-containing protein 1 (156 aa).

Residues 44–156 (NFSVFEDISQ…ERIFREWAKI (113 aa)) enclose the SCP2 domain.

The sequence is that of SCP2 sterol-binding domain-containing protein 1 (Scp2d1) from Mus musculus (Mouse).